Reading from the N-terminus, the 198-residue chain is Ribonuclease HII (198 aa).

Residues 6 to 195 (RRVAGVDEVG…VHHMLYQDKN (190 aa)) form the RNase H type-2 domain. Residues Asp12, Glu13, and Asp103 each coordinate a divalent metal cation.

The protein belongs to the RNase HII family. The cofactor is Mn(2+). Mg(2+) serves as cofactor.

The protein resides in the cytoplasm. The catalysed reaction is Endonucleolytic cleavage to 5'-phosphomonoester.. Endonuclease that specifically degrades the RNA of RNA-DNA hybrids. This is Ribonuclease HII from Roseobacter denitrificans (strain ATCC 33942 / OCh 114) (Erythrobacter sp. (strain OCh 114)).